The following is a 194-amino-acid chain: Imidazoleglycerol-phosphate dehydratase (194 aa).

Belongs to the imidazoleglycerol-phosphate dehydratase family.

Its subcellular location is the cytoplasm. The enzyme catalyses D-erythro-1-(imidazol-4-yl)glycerol 3-phosphate = 3-(imidazol-4-yl)-2-oxopropyl phosphate + H2O. It functions in the pathway amino-acid biosynthesis; L-histidine biosynthesis; L-histidine from 5-phospho-alpha-D-ribose 1-diphosphate: step 6/9. This chain is Imidazoleglycerol-phosphate dehydratase, found in Bacillus pumilus (strain SAFR-032).